The chain runs to 448 residues: tRNA modification GTPase MnmE (448 aa).

Arginine 22, glutamate 79, and lysine 118 together coordinate (6S)-5-formyl-5,6,7,8-tetrahydrofolate. Positions 214–371 constitute a TrmE-type G domain; sequence GLHVVLAGQP…LRQELLRIAG (158 aa). Position 224 (asparagine 224) interacts with K(+). GTP contacts are provided by residues 224-229, 243-249, and 268-271; these read NVGKSS, TPIAGTT, and DTAG. Residue serine 228 participates in Mg(2+) binding. Residues threonine 243, isoleucine 245, and threonine 248 each contribute to the K(+) site. Threonine 249 contributes to the Mg(2+) binding site. (6S)-5-formyl-5,6,7,8-tetrahydrofolate is bound at residue lysine 448.

This sequence belongs to the TRAFAC class TrmE-Era-EngA-EngB-Septin-like GTPase superfamily. TrmE GTPase family. As to quaternary structure, homodimer. Heterotetramer of two MnmE and two MnmG subunits. K(+) serves as cofactor.

It localises to the cytoplasm. In terms of biological role, exhibits a very high intrinsic GTPase hydrolysis rate. Involved in the addition of a carboxymethylaminomethyl (cmnm) group at the wobble position (U34) of certain tRNAs, forming tRNA-cmnm(5)s(2)U34. In Dechloromonas aromatica (strain RCB), this protein is tRNA modification GTPase MnmE.